The sequence spans 270 residues: Cyclic pyranopterin monophosphate synthase, mitochondrial (270 aa).

Residues 1 to 32 (MISTLRRAVFLRRFPAVVSPIKRAFSSRIDDE) constitute a mitochondrion transit peptide. Substrate contacts are provided by residues 187-189 (LCH) and 225-226 (ME). Residue Asp240 is part of the active site.

The protein belongs to the MoaC family. In terms of assembly, homohexamer. As to expression, abundantly expressed in the roots.

The protein resides in the mitochondrion matrix. The enzyme catalyses (8S)-3',8-cyclo-7,8-dihydroguanosine 5'-triphosphate = cyclic pyranopterin phosphate + diphosphate. The protein operates within cofactor biosynthesis; molybdopterin biosynthesis. Its function is as follows. Catalyzes the conversion of (8S)-3',8-cyclo-7,8-dihydroguanosine 5'-triphosphate to cyclic pyranopterin monophosphate (cPMP). The protein is Cyclic pyranopterin monophosphate synthase, mitochondrial (CNX3) of Arabidopsis thaliana (Mouse-ear cress).